We begin with the raw amino-acid sequence, 293 residues long: C-type lectin domain family 4 member G (293 aa).

The Cytoplasmic segment spans residues 1–31 (MDTTRYSKWGGSSEEVPGGPWGRWVHWSRRP). Ser-12 carries the post-translational modification Phosphoserine. The chain crosses the membrane as a helical; Signal-anchor for type II membrane protein span at residues 32-52 (LFLALAVLVTTVLWAVILSIL). Residues 53–293 (LSKASTERAA…GWICEKRHNC (241 aa)) lie on the Extracellular side of the membrane. A glycan (N-linked (GlcNAc...) asparagine) is linked at Asn-73. Residues 96 to 136 (SGTQAQLQTTRAELGEAQAKLMEQESALRELRERVTQGLAE) adopt a coiled-coil conformation. Asn-159 is a glycosylation site (N-linked (GlcNAc...) asparagine). The region spanning 172–287 (FEGSCYFFSV…CDSEKDGWIC (116 aa)) is the C-type lectin domain. A disulfide bridge links Cys-264 with Cys-278.

In terms of assembly, (Microbial infection) Interacts with Japanese encephalitis virus envelope protein E. (Microbial infection) Interacts with ebolavirus glycoprotein. As to quaternary structure, (Microbial infection) Interacts with SARS-CoV spike glycoprotein. In terms of assembly, (Microbial infection) Interacts with lassa virus and Lymphocytic choriomeningitis virus glycoprotein. As to expression, expressed exclusively in fetal and adult liver and in lymph nodes. Specifically expressed by endothelial cells lining lymph node and liver sinuses (at protein level).

It is found in the cell membrane. In terms of biological role, binds mannose, N-acetylglucosamine (GlcNAc) and fucose, but not galactose, in a Ca(2+)-dependent manner, in vitro. Functionally, (Microbial infection) Acts as a receptor for Japanese encephalitis virus. (Microbial infection) Acts as a receptor for Ebolavirus. Its function is as follows. (Microbial infection) Acts as a receptor for SARS-CoV. In terms of biological role, (Microbial infection) Acts as a receptor for Lassa virus and Lymphocytic choriomeningitis virus glycoprotein. The protein is C-type lectin domain family 4 member G (CLEC4G) of Homo sapiens (Human).